The primary structure comprises 146 residues: Ribonuclease H (146 aa).

Residues 1-143 (MQKKIIVYTD…CDELARQAIK (143 aa)) form the RNase H type-1 domain. The Mg(2+) site is built by D10, E48, D70, and D135.

It belongs to the RNase H family. Monomer. Mg(2+) serves as cofactor.

It localises to the cytoplasm. The enzyme catalyses Endonucleolytic cleavage to 5'-phosphomonoester.. Functionally, endonuclease that specifically degrades the RNA of RNA-DNA hybrids. This Chlorobium phaeobacteroides (strain DSM 266 / SMG 266 / 2430) protein is Ribonuclease H.